Reading from the N-terminus, the 226-residue chain is 2-C-methyl-D-erythritol 4-phosphate cytidylyltransferase (226 aa).

The protein belongs to the IspD/TarI cytidylyltransferase family. IspD subfamily.

The catalysed reaction is 2-C-methyl-D-erythritol 4-phosphate + CTP + H(+) = 4-CDP-2-C-methyl-D-erythritol + diphosphate. It participates in isoprenoid biosynthesis; isopentenyl diphosphate biosynthesis via DXP pathway; isopentenyl diphosphate from 1-deoxy-D-xylulose 5-phosphate: step 2/6. Functionally, catalyzes the formation of 4-diphosphocytidyl-2-C-methyl-D-erythritol from CTP and 2-C-methyl-D-erythritol 4-phosphate (MEP). This is 2-C-methyl-D-erythritol 4-phosphate cytidylyltransferase from Rhodococcus jostii (strain RHA1).